The sequence spans 357 residues: Serine protease 1 (357 aa).

An N-terminal signal peptide occupies residues 1–29; the sequence is MRRTTRARTGLSALLLAASLGLGAAPAGA. The propeptide occupies 30-170; sequence DAPQRPAPTP…TRVPGVFQRE (141 aa). A disulfide bridge links C184 with C204. Residues H203, D232, and S313 each act as charge relay system in the active site. The cysteines at positions 307 and 333 are disulfide-linked.

The protein belongs to the peptidase S1 family.

Its subcellular location is the secreted. In terms of biological role, serine protease that preferentially cleaves peptide bonds on the C-terminal side of aspartate and glutamate with a 10-fold higher reactivity for a glutamyl bond than an aspartyl bond. This is Serine protease 1 from Streptomyces fradiae (Streptomyces roseoflavus).